Here is a 229-residue protein sequence, read N- to C-terminus: UPF0173 metal-dependent hydrolase Hbut_0886 (229 aa).

Belongs to the UPF0173 family.

The polypeptide is UPF0173 metal-dependent hydrolase Hbut_0886 (Hyperthermus butylicus (strain DSM 5456 / JCM 9403 / PLM1-5)).